We begin with the raw amino-acid sequence, 248 residues long: Proteasome subunit alpha type-3 (248 aa).

It belongs to the peptidase T1A family. In terms of assembly, the 26S proteasome consists of a 20S proteasome core and two 19S regulatory subunits. The 20S proteasome core is composed of 28 subunits that are arranged in four stacked rings, resulting in a barrel-shaped structure. The two end rings are each formed by seven alpha subunits, and the two central rings are each formed by seven beta subunits. The catalytic chamber with the active sites is on the inside of the barrel.

Its subcellular location is the cytoplasm. The protein localises to the nucleus. The proteasome is a multicatalytic proteinase complex which is characterized by its ability to cleave peptides with Arg, Phe, Tyr, Leu, and Glu adjacent to the leaving group at neutral or slightly basic pH. The proteasome has an ATP-dependent proteolytic activity. This Dictyostelium discoideum (Social amoeba) protein is Proteasome subunit alpha type-3 (psmA3).